The chain runs to 218 residues: Protein-methionine-sulfoxide reductase heme-binding subunit MsrQ (218 aa).

Transmembrane regions (helical) follow at residues 14 to 34 (LVHA…WQVW), 60 to 80 (FLLI…AVVI), 86 to 106 (LGLY…TLDL), 121 to 141 (PYIT…ITST), and 155 to 175 (LHTL…WLVK).

This sequence belongs to the MsrQ family. As to quaternary structure, heterodimer of a catalytic subunit (MsrP) and a heme-binding subunit (MsrQ). The cofactor is FMN. It depends on heme b as a cofactor.

The protein localises to the cell inner membrane. In terms of biological role, part of the MsrPQ system that repairs oxidized periplasmic proteins containing methionine sulfoxide residues (Met-O), using respiratory chain electrons. Thus protects these proteins from oxidative-stress damage caused by reactive species of oxygen and chlorine generated by the host defense mechanisms. MsrPQ is essential for the maintenance of envelope integrity under bleach stress, rescuing a wide series of structurally unrelated periplasmic proteins from methionine oxidation. MsrQ provides electrons for reduction to the reductase catalytic subunit MsrP, using the quinone pool of the respiratory chain. The chain is Protein-methionine-sulfoxide reductase heme-binding subunit MsrQ from Xanthomonas euvesicatoria pv. vesicatoria (strain 85-10) (Xanthomonas campestris pv. vesicatoria).